The sequence spans 359 residues: Threonine dehydratase biosynthetic, chloroplastic (359 aa).

2 consecutive ACT-like domains span residues Ala-184–His-256 and Ile-278–Ser-349.

The protein belongs to the serine/threonine dehydratase family. In terms of assembly, homotetramer. The cofactor is pyridoxal 5'-phosphate. In terms of tissue distribution, floral buds of untreated plants. After ABA treatment or mechanical wounding is mostly accumulated in leaves, to a lesser extent in stems, but not in roots. Expressed in anthers, carpel leaves, pith cells, sepals and petals. Not expressed in stomium, vascular bundles, epidermal cells or pollen mother cells.

The protein localises to the plastid. The protein resides in the chloroplast. The catalysed reaction is L-threonine = 2-oxobutanoate + NH4(+). It participates in amino-acid biosynthesis; L-isoleucine biosynthesis; 2-oxobutanoate from L-threonine: step 1/1. The sequence is that of Threonine dehydratase biosynthetic, chloroplastic from Solanum tuberosum (Potato).